We begin with the raw amino-acid sequence, 332 residues long: UDP-3-O-acylglucosamine N-acyltransferase (332 aa).

The active-site Proton acceptor is the histidine 235.

It belongs to the transferase hexapeptide repeat family. LpxD subfamily. Homotrimer.

The enzyme catalyses a UDP-3-O-[(3R)-3-hydroxyacyl]-alpha-D-glucosamine + a (3R)-hydroxyacyl-[ACP] = a UDP-2-N,3-O-bis[(3R)-3-hydroxyacyl]-alpha-D-glucosamine + holo-[ACP] + H(+). The protein operates within bacterial outer membrane biogenesis; LPS lipid A biosynthesis. In terms of biological role, catalyzes the N-acylation of UDP-3-O-acylglucosamine using 3-hydroxyacyl-ACP as the acyl donor. Is involved in the biosynthesis of lipid A, a phosphorylated glycolipid that anchors the lipopolysaccharide to the outer membrane of the cell. This chain is UDP-3-O-acylglucosamine N-acyltransferase, found in Fusobacterium nucleatum subsp. nucleatum (strain ATCC 25586 / DSM 15643 / BCRC 10681 / CIP 101130 / JCM 8532 / KCTC 2640 / LMG 13131 / VPI 4355).